The sequence spans 161 residues: Ribonuclease H (161 aa).

The region spanning 5 to 149 is the RNase H type-1 domain; the sequence is EKLAIAAATD…VDAIAVAFSK (145 aa). Mg(2+) contacts are provided by Asp14, Glu53, Asp78, and Asp141.

This sequence belongs to the RNase H family. Monomer. Mg(2+) is required as a cofactor.

It localises to the cytoplasm. The enzyme catalyses Endonucleolytic cleavage to 5'-phosphomonoester.. Endonuclease that specifically degrades the RNA of RNA-DNA hybrids. The chain is Ribonuclease H from Prochlorococcus marinus (strain NATL1A).